The following is a 456-amino-acid chain: Methylenetetrahydrofolate--tRNA-(uracil-5-)-methyltransferase TrmFO (456 aa).

Residue 11-16 coordinates FAD; the sequence is GGGLAG.

This sequence belongs to the MnmG family. TrmFO subfamily. The cofactor is FAD.

The protein localises to the cytoplasm. The catalysed reaction is uridine(54) in tRNA + (6R)-5,10-methylene-5,6,7,8-tetrahydrofolate + NADH + H(+) = 5-methyluridine(54) in tRNA + (6S)-5,6,7,8-tetrahydrofolate + NAD(+). It carries out the reaction uridine(54) in tRNA + (6R)-5,10-methylene-5,6,7,8-tetrahydrofolate + NADPH + H(+) = 5-methyluridine(54) in tRNA + (6S)-5,6,7,8-tetrahydrofolate + NADP(+). In terms of biological role, catalyzes the folate-dependent formation of 5-methyl-uridine at position 54 (M-5-U54) in all tRNAs. This is Methylenetetrahydrofolate--tRNA-(uracil-5-)-methyltransferase TrmFO from Synechocystis sp. (strain ATCC 27184 / PCC 6803 / Kazusa).